The chain runs to 838 residues: MTGAEIEPSAQAKPEKKAGEEVVAGPERENDVPLVVRPKVRTQATTGARPKTETKSVPAARPKTEAQAMSGARPKTEAQVMGGARPKTEAQGMAGARPKTDARAVGGARSKTDAKAIPGARPEDEAQAWAQSEFGTEAVSQAEGVSQTNAVAWPLATAESGSVTKSKGLSMDRELVNVDAETFPGTQGQKGIQPWFGPGEETNMGSWCYSRPRAREEASNESGFWSADETSTASSFWAGEETSVRSWPREESNTRSRHRAKHQTNPRSRPRSKQEAYVDSWSGSEDEAGNPFSFWAGENTNNLFRPRVREEANIRSKLRTNREDCFESESEDEFYKQSWVLPGEEADSRFRHRDKEDPNTALKLRAQKDVDSDRVKQEPRFEEEVIIGSWFWAEKETSLEGGASAICESEPGTEEGAIGGSAYWAEEKSSLGAVAREEAKPESEEEAIFGSWFWDRDEACFDLNPCPVYKVSDRFRDAAEELNASSRPQTWDEVTVEFKPGLFHGVGFRSTSPFRIPEEASEMLEAKPKNLELSPEGEEQESLLQPDQPSPEFTFQYDPSYRSVREIREHLRARESAESESWSCSCIQCELKIGSEEFEELLLLMDKIRDPFIHEISKIAMGMRSASQFTRDFIRDSGVVSLIETLLNYPSSRVRTSFLENMIHMAPPYPNLNMIETFICQVCEETLAHSVDSLEQLTGIRMLRHLTMTIDYHTLIANYMSGFLSLLTTANARTKFHVLKMLLNLSENPAVAKKLFSAKALSIFVGLFNIEETNDNIQIVIKMFQNISNIIKSGKMSLIDDDFSLEPLISAFREFEELAKQLQAQIDNQNDPEVGQQS.

Disordered stretches follow at residues 1–121 (MTGA…PGAR), 218–293 (ASNE…NPFS), and 531–552 (LELS…PSPE). Over residues 13 to 31 (KPEKKAGEEVVAGPEREND) the composition is skewed to basic and acidic residues. Residues 220-235 (NESGFWSADETSTASS) are compositionally biased toward polar residues. Residues 255–271 (RSRHRAKHQTNPRSRPR) show a composition bias toward basic residues. A phosphoserine mark is found at serine 282 and serine 284. The span at 542–552 (SLLQPDQPSPE) shows a compositional bias: polar residues.

The protein belongs to the GPRASP family. Interacts with cytoplasmic tails of a variety of G protein-coupled receptors such as muscarinic acetylcholine receptor M1/CHRM1 and calcitonin receptor/CALCR.

Its function is as follows. May play a role in regulation of a variety of G-protein coupled receptors. The sequence is that of G-protein coupled receptor-associated sorting protein 2 (GPRASP2) from Pongo abelii (Sumatran orangutan).